We begin with the raw amino-acid sequence, 118 residues long: Holo-[acyl-carrier-protein] synthase (118 aa).

The Mg(2+) site is built by D8 and E58.

Belongs to the P-Pant transferase superfamily. AcpS family. Requires Mg(2+) as cofactor.

The protein localises to the cytoplasm. The catalysed reaction is apo-[ACP] + CoA = holo-[ACP] + adenosine 3',5'-bisphosphate + H(+). In terms of biological role, transfers the 4'-phosphopantetheine moiety from coenzyme A to a Ser of acyl-carrier-protein. This is Holo-[acyl-carrier-protein] synthase from Streptococcus pyogenes serotype M28 (strain MGAS6180).